A 90-amino-acid polypeptide reads, in one-letter code: Secretoglobin family 1D member 1 (90 aa).

A signal peptide spans 1–21 (MRLSVCLLLLTLALCCYRANA).

Heterodimer of a lipophilin A and a lipophilin C (mammaglobin B) monomer associated head to head. In terms of tissue distribution, expressed in lachrymal gland, thymus, kidney, testis, ovary and salivary gland.

The protein resides in the secreted. Functionally, may bind androgens and other steroids, may also bind estramustine, a chemotherapeutic agent used for prostate cancer. May be under transcriptional regulation of steroid hormones. This chain is Secretoglobin family 1D member 1 (SCGB1D1), found in Homo sapiens (Human).